The chain runs to 315 residues: Serpentine receptor class delta-31 (315 aa).

7 helical membrane-spanning segments follow: residues 6 to 26 (LHSILSLTAVLLNAFTMYLAI), 38 to 58 (AIITIKTATDILTSIMSFFVM), 83 to 103 (ACYVGHMLMLCFLEYNLIWMI), 124 to 144 (VFVAFCLSIPSIIHMVVWFSI), 174 to 194 (ITLITQLFITAFLVIVAYIWI), 225 to 245 (FQVFLPSFIFLGVITFASMFT), and 256 to 276 (AISVIFMFSPIISPFSYILFV).

This sequence belongs to the nematode receptor-like protein srd family.

It localises to the membrane. This chain is Serpentine receptor class delta-31 (srd-31), found in Caenorhabditis elegans.